The sequence spans 686 residues: Methionine--tRNA ligase (686 aa).

The 'HIGH' region motif lies at 13 to 23; the sequence is PYANGQIHIGH. Positions 144, 147, 157, and 160 each coordinate Zn(2+). The 'KMSKS' region signature appears at 335-339; the sequence is KMSKS. K338 serves as a coordination point for ATP. One can recognise a tRNA-binding domain in the interval 580–686; it reads DFAKVDLRVA…EGAVPGMRIG (107 aa).

This sequence belongs to the class-I aminoacyl-tRNA synthetase family. MetG type 1 subfamily. In terms of assembly, homodimer. The cofactor is Zn(2+).

The protein resides in the cytoplasm. It catalyses the reaction tRNA(Met) + L-methionine + ATP = L-methionyl-tRNA(Met) + AMP + diphosphate. Is required not only for elongation of protein synthesis but also for the initiation of all mRNA translation through initiator tRNA(fMet) aminoacylation. The sequence is that of Methionine--tRNA ligase from Cupriavidus necator (strain ATCC 17699 / DSM 428 / KCTC 22496 / NCIMB 10442 / H16 / Stanier 337) (Ralstonia eutropha).